Reading from the N-terminus, the 222-residue chain is MKKYINVAIDGPSGSGKSTAAKGLANKLGFLYINTGLMYRAYAYFLNENNLDINTNETACIEAIKNARFIFNGDDVKIDDQDVSDILRSNDVAMLASVVAANAKIRNLATNEQRKIASENNVVMDGRDIGSIVLVDADLKFYLNTSIQTRAKRRLAQNKDIEKLDYESIYNDIKERDYRDMTRDIAPLKKAIDAIEIFNDNMNLDQCVAHLYEIYLNKIKKS.

Position 11–19 (11–19 (GPSGSGKST)) interacts with ATP.

It belongs to the cytidylate kinase family. Type 1 subfamily.

The protein resides in the cytoplasm. The enzyme catalyses CMP + ATP = CDP + ADP. The catalysed reaction is dCMP + ATP = dCDP + ADP. In Ureaplasma urealyticum serovar 10 (strain ATCC 33699 / Western), this protein is Cytidylate kinase.